Consider the following 256-residue polypeptide: Type III pantothenate kinase (256 aa).

6-13 (DVGNSHIY) serves as a coordination point for ATP. Substrate is bound by residues Tyr99 and 106-109 (GADR). Asp108 acts as the Proton acceptor in catalysis. Asp129 lines the K(+) pocket. Thr132 provides a ligand contact to ATP. Residue Thr184 coordinates substrate.

Belongs to the type III pantothenate kinase family. In terms of assembly, homodimer. It depends on NH4(+) as a cofactor. K(+) is required as a cofactor.

The protein resides in the cytoplasm. It carries out the reaction (R)-pantothenate + ATP = (R)-4'-phosphopantothenate + ADP + H(+). It participates in cofactor biosynthesis; coenzyme A biosynthesis; CoA from (R)-pantothenate: step 1/5. Its function is as follows. Catalyzes the phosphorylation of pantothenate (Pan), the first step in CoA biosynthesis. The polypeptide is Type III pantothenate kinase (Legionella pneumophila (strain Paris)).